Reading from the N-terminus, the 120-residue chain is VVLCFLGTGLVDMKVTQMSRYLIKRMGENVLLECGQDMSHETMYWYRQDPGLGLQLIYISYDVDSNSEGDIPKGYRVSRKKREHFSLILDSAKTNQTSVYFCAQGAPEQYFGPGTRLTVL.

Residues 1-11 (VVLCFLGTGLV) form the signal peptide. The tract at residues 12–106 (DMKVTQMSRY…TSVYFCAQGA (95 aa)) is v segment. Cysteines 34 and 102 form a disulfide. The tract at residues 107–120 (PEQYFGPGTRLTVL) is j segment.

This Mus musculus (Mouse) protein is T-cell receptor beta chain V region PHDS203.